Here is a 65-residue protein sequence, read N- to C-terminus: Vespid chemotactic peptide 5h (65 aa).

The N-terminal stretch at 1-23 is a signal peptide; the sequence is MKYNIVFLFAIIASLACLQLTFA. AXPX repeat units follow at residues 23–26, 27–30, 31–34, 35–38, 39–42, 43–46, and 47–50; these read AAPA, ASPL, ANPG, ASPD, AAPN, ADPL, and ADPF. Residues 24–49 constitute a propeptide that is removed on maturation; sequence APAASPLANPGASPDAAPNADPLADP. L62 carries the leucine amide modification.

Belongs to the MCD family. Crabrolin subfamily. In terms of tissue distribution, expressed by the venom gland.

The protein localises to the secreted. Its function is as follows. Shows antimicrobial activity against the Gram-negative bacteria E.coli ATCC 25922 (MIC=30 ug/ml), the Gram-positive bacteria S.aureus ATCC 2592 (MIC=5 ug/ml) and the fungus C.albicans ATCC 2002 (MIC=25 ug/ml). Acts as a mast cell degranulating peptide. Its mast cell degranulation activity may be related to the activation of G-protein coupled receptors in mast cells as well as interaction with other proteins located in cell endosomal membranes in the mast cells. Induces the chemotaxis of neutrophils. The sequence is that of Vespid chemotactic peptide 5h from Vespa magnifica (Hornet).